Consider the following 286-residue polypeptide: Shikimate dehydrogenase (NADP(+)) (286 aa).

Shikimate-binding positions include 25-27 (SLS) and T72. The active-site Proton acceptor is the K76. E88 serves as a coordination point for NADP(+). Shikimate is bound by residues N97 and D113. Residues 138-142 (GSGGA), 162-167 (NRTIER), and I232 contribute to the NADP(+) site. Y234 is a shikimate binding site. G255 serves as a coordination point for NADP(+).

The protein belongs to the shikimate dehydrogenase family. As to quaternary structure, homodimer.

The enzyme catalyses shikimate + NADP(+) = 3-dehydroshikimate + NADPH + H(+). Its pathway is metabolic intermediate biosynthesis; chorismate biosynthesis; chorismate from D-erythrose 4-phosphate and phosphoenolpyruvate: step 4/7. Functionally, involved in the biosynthesis of the chorismate, which leads to the biosynthesis of aromatic amino acids. Catalyzes the reversible NADPH linked reduction of 3-dehydroshikimate (DHSA) to yield shikimate (SA). This Magnetococcus marinus (strain ATCC BAA-1437 / JCM 17883 / MC-1) protein is Shikimate dehydrogenase (NADP(+)).